A 56-amino-acid chain; its full sequence is Large ribosomal subunit protein bL32 (56 aa).

Residues 1–21 (MAVQKNKPTRSKRGMRRSHDA) are disordered. A compositionally biased stretch (basic residues) spans 7-16 (KPTRSKRGMR).

This sequence belongs to the bacterial ribosomal protein bL32 family.

The protein is Large ribosomal subunit protein bL32 of Hamiltonella defensa subsp. Acyrthosiphon pisum (strain 5AT).